The following is a 154-amino-acid chain: Putative pre-16S rRNA nuclease (154 aa).

The protein belongs to the YqgF nuclease family.

It is found in the cytoplasm. Could be a nuclease involved in processing of the 5'-end of pre-16S rRNA. This is Putative pre-16S rRNA nuclease from Rickettsia felis (strain ATCC VR-1525 / URRWXCal2) (Rickettsia azadi).